A 52-amino-acid polypeptide reads, in one-letter code: Conotoxin Cal9.2d (52 aa).

The propeptide occupies 1–6 (KRGVTL). Cystine bridges form between C14–C31, C19–C41, and C21–C46.

As to expression, expressed by the venom duct.

It localises to the secreted. In terms of biological role, probable neurotoxin with unknown target. Possibly targets ion channels. The polypeptide is Conotoxin Cal9.2d (Californiconus californicus (California cone)).